The sequence spans 287 residues: MAAITAALVKELRERTGEGMMDCKKALEKAGGDIEKAIDDMRASGAIKAAKKAGNVAAEGAIAVKTDGTSAVLLEVNSQTDFLALQDDFKNFVAESLEEAFAQKLTDAAPLIASREAAREALVAKCGENVNIRRLVRVEGDVVGAYLHGNKIGAVVVLKGGDVELAKNIAMHVAASNPEFLDSSEISAEAIEREKNVFLQLNADKIAGKPENIVENMINGRITKFKAEASLKEQAFVMNPEIKVGELAKKAGAEIVSFTYFKVGEGIEKPVDDFAAEVAAQVAAAKQ.

The interval 80–83 is involved in Mg(2+) ion dislocation from EF-Tu; the sequence is TDFL.

Belongs to the EF-Ts family.

The protein localises to the cytoplasm. Functionally, associates with the EF-Tu.GDP complex and induces the exchange of GDP to GTP. It remains bound to the aminoacyl-tRNA.EF-Tu.GTP complex up to the GTP hydrolysis stage on the ribosome. The chain is Elongation factor Ts from Pseudomonas putida (strain ATCC 47054 / DSM 6125 / CFBP 8728 / NCIMB 11950 / KT2440).